The primary structure comprises 238 residues: HTH-type transcriptional regulator TreR (238 aa).

In terms of domain architecture, HTH gntR-type spans 1 to 71 (MKVNKFITIY…RGKGSVVLNR (71 aa)). Positions 31-50 (EHELTAQYGTSRETVRKALH) form a DNA-binding region, H-T-H motif.

As to quaternary structure, dimer of dimers.

Its function is as follows. Repressor for the trePA operon. It is able to bind trehalose-6-phosphate. This chain is HTH-type transcriptional regulator TreR (treR), found in Bacillus subtilis (strain 168).